The sequence spans 84 residues: Sulfur carrier protein TusA (84 aa).

The active-site Cysteine persulfide intermediate is the C21.

Belongs to the sulfur carrier protein TusA family.

The protein localises to the cytoplasm. Its function is as follows. Sulfur carrier protein which probably makes part of a sulfur-relay system. In Pseudomonas syringae pv. tomato (strain ATCC BAA-871 / DC3000), this protein is Sulfur carrier protein TusA.